The chain runs to 354 residues: Methylthioribose-1-phosphate isomerase (354 aa).

Residues 58-60 (RGA), Arg101, and Gln204 contribute to the substrate site. Asp245 (proton donor) is an active-site residue. 255 to 256 (NK) contacts substrate.

It belongs to the eIF-2B alpha/beta/delta subunits family. MtnA subfamily.

It carries out the reaction 5-(methylsulfanyl)-alpha-D-ribose 1-phosphate = 5-(methylsulfanyl)-D-ribulose 1-phosphate. Its pathway is amino-acid biosynthesis; L-methionine biosynthesis via salvage pathway; L-methionine from S-methyl-5-thio-alpha-D-ribose 1-phosphate: step 1/6. Functionally, catalyzes the interconversion of methylthioribose-1-phosphate (MTR-1-P) into methylthioribulose-1-phosphate (MTRu-1-P). This chain is Methylthioribose-1-phosphate isomerase, found in Stenotrophomonas maltophilia (strain R551-3).